A 472-amino-acid chain; its full sequence is Serine/threonine-protein kinase ULK3 (472 aa).

In terms of domain architecture, Protein kinase spans 14–270 (FILTERLGSG…FKDFFAHPWV (257 aa)). ATP is bound by residues 20-28 (LGSGTYATV) and lysine 44. The Proton acceptor role is filled by aspartate 137. Serine 176 bears the Phosphoserine mark. Residues 280-348 (SLAQARALVV…SRAEELKAIV (69 aa)) form the MIT 1 domain. Residues serine 350, serine 384, and serine 464 each carry the phosphoserine; by autocatalysis modification. One can recognise an MIT 2 domain in the interval 375 to 444 (RLLAALEVAS…ARAEYLKEQI (70 aa)).

It belongs to the protein kinase superfamily. Ser/Thr protein kinase family. APG1/unc-51/ULK1 subfamily. In terms of assembly, interacts (via protein kinase domain) with SUFU. Autophosphorylated. Autophosphorylation is blocked by interaction with SUFU.

Its subcellular location is the cytoplasm. The enzyme catalyses L-seryl-[protein] + ATP = O-phospho-L-seryl-[protein] + ADP + H(+). It carries out the reaction L-threonyl-[protein] + ATP = O-phospho-L-threonyl-[protein] + ADP + H(+). Functionally, serine/threonine protein kinase that acts as a regulator of Sonic hedgehog (SHH) signaling and autophagy. Acts as a negative regulator of SHH signaling in the absence of SHH ligand: interacts with SUFU, thereby inactivating the protein kinase activity and preventing phosphorylation of GLI proteins (GLI1, GLI2 and/or GLI3). Positively regulates SHH signaling in the presence of SHH: dissociates from SUFU, autophosphorylates and mediates phosphorylation of GLI2, activating it and promoting its nuclear translocation. Phosphorylates in vitro GLI2, as well as GLI1 and GLI3, although less efficiently. Also acts as a regulator of autophagy: following cellular senescence, able to induce autophagy. This is Serine/threonine-protein kinase ULK3 (Ulk3) from Mus musculus (Mouse).